We begin with the raw amino-acid sequence, 94 residues long: Pyrimidine/purine nucleoside phosphorylase (94 aa).

The protein belongs to the nucleoside phosphorylase PpnP family.

It catalyses the reaction a purine D-ribonucleoside + phosphate = a purine nucleobase + alpha-D-ribose 1-phosphate. The catalysed reaction is adenosine + phosphate = alpha-D-ribose 1-phosphate + adenine. The enzyme catalyses cytidine + phosphate = cytosine + alpha-D-ribose 1-phosphate. It carries out the reaction guanosine + phosphate = alpha-D-ribose 1-phosphate + guanine. It catalyses the reaction inosine + phosphate = alpha-D-ribose 1-phosphate + hypoxanthine. The catalysed reaction is thymidine + phosphate = 2-deoxy-alpha-D-ribose 1-phosphate + thymine. The enzyme catalyses uridine + phosphate = alpha-D-ribose 1-phosphate + uracil. It carries out the reaction xanthosine + phosphate = alpha-D-ribose 1-phosphate + xanthine. In terms of biological role, catalyzes the phosphorolysis of diverse nucleosides, yielding D-ribose 1-phosphate and the respective free bases. Can use uridine, adenosine, guanosine, cytidine, thymidine, inosine and xanthosine as substrates. Also catalyzes the reverse reactions. The polypeptide is Pyrimidine/purine nucleoside phosphorylase (Alcanivorax borkumensis (strain ATCC 700651 / DSM 11573 / NCIMB 13689 / SK2)).